A 655-amino-acid polypeptide reads, in one-letter code: Probable replication restart protein PriA (655 aa).

Zn(2+)-binding residues include C368, C371, C377, C380, C396, C399, C408, and C411.

This sequence belongs to the helicase family. PriA subfamily. In terms of assembly, component of the replication restart primosome. It depends on Zn(2+) as a cofactor.

In terms of biological role, initiates the restart of stalled replication forks, which reloads the replicative helicase on sites other than the origin of replication. Recognizes and binds to abandoned replication forks and remodels them to uncover a helicase loading site. Promotes assembly of the primosome at these replication forks. In Mycobacterium bovis (strain ATCC BAA-935 / AF2122/97), this protein is Probable replication restart protein PriA.